A 266-amino-acid polypeptide reads, in one-letter code: Glutamate racemase (266 aa).

Substrate contacts are provided by residues 9–10 and 41–42; these read DS and YG. Catalysis depends on C72, which acts as the Proton donor/acceptor. A substrate-binding site is contributed by 73 to 74; it reads NT. The Proton donor/acceptor role is filled by C184. 185 to 186 provides a ligand contact to substrate; sequence TH.

This sequence belongs to the aspartate/glutamate racemases family.

It catalyses the reaction L-glutamate = D-glutamate. It participates in cell wall biogenesis; peptidoglycan biosynthesis. Its function is as follows. Provides the (R)-glutamate required for cell wall biosynthesis. This chain is Glutamate racemase, found in Staphylococcus carnosus (strain TM300).